The chain runs to 364 residues: Coproporphyrin III ferrochelatase (364 aa).

Positions 29 and 118 each coordinate Fe-coproporphyrin III. 2 residues coordinate Fe(2+): histidine 169 and glutamate 250.

Belongs to the ferrochelatase family.

The protein localises to the cytoplasm. The catalysed reaction is Fe-coproporphyrin III + 2 H(+) = coproporphyrin III + Fe(2+). It participates in porphyrin-containing compound metabolism; protoheme biosynthesis. In terms of biological role, involved in coproporphyrin-dependent heme b biosynthesis. Catalyzes the insertion of ferrous iron into coproporphyrin III to form Fe-coproporphyrin III. The sequence is that of Coproporphyrin III ferrochelatase from Streptococcus pneumoniae serotype 2 (strain D39 / NCTC 7466).